The following is a 580-amino-acid chain: Glyco-Gag protein (580 aa).

Residues M1–R51 lie on the Cytoplasmic side of the membrane. A helical membrane pass occupies residues L52–E72. At A73 to D580 the chain is on the extracellular side. A glycan (N-linked (GlcNAc...) asparagine; by host) is linked at N134. Disordered regions lie at residues V171–Q282, E491–E514, and R560–D580. Positions F174 to S193 are enriched in pro residues. Low complexity predominate over residues A194–V203. Composition is skewed to pro residues over residues V204–S220 and E230–P245. Over residues E491–D508 the composition is skewed to basic and acidic residues. Positions A571–D580 are enriched in polar residues. N-linked (GlcNAc...) asparagine; by host glycosylation occurs at N572.

Glycosylated by host. In terms of processing, cleaved by host near the middle of the molecule, releasing the c-terminal half containing capsid and nucleoprotein domains op GAG.

The protein localises to the host cell membrane. Plays a role in viral particle release. Presumably acts by facilitating the fission of the virion bud at the cell surface. The polypeptide is Glyco-Gag protein (Feline leukemia virus).